We begin with the raw amino-acid sequence, 403 residues long: MSFSQAVSGLNAAATNLDVIGNNIANSATYGFKSGTASFADMFAGSKVGLGVKVAGITQDFTDGTTTNTGRGLDVAISQNGFFRLVDSNGSVFYSRNGQFKLDENRNLVNMQGMQLTGYPATGTPPTIQQGANPAPITIPNTLMAAKSTTTASMQINLNSTDPVPSKTPFSVSDADSYNKKGTVTVYDSQGNAHDMNVYFVKTKDNEWAVYTHDSSDPAATAPTTASTTLKFNENGILESGGTVNITTGTINGATAATFSLSFLNSMQQNTGANNIVATNQNGYKPGDLVSYQINNDGTVVGNYSNEQEQVLGQIVLANFANNEGLASQGDNVWAATQASGVALLGTAGSGNFGKLTNGALEASNVDLSKELVNMIVAQRNYQSNAQTIKTQDQILNTLVNLR.

The protein belongs to the flagella basal body rod proteins family.

It is found in the bacterial flagellum basal body. This chain is Flagellar hook protein FlgE (flgE), found in Salmonella typhi.